A 230-amino-acid chain; its full sequence is Preflagellin peptidase (230 aa).

M1 is a topological domain (cytoplasmic). Residues 2-18 (IEYIIGALGLIIASVQD) form a helical membrane-spanning segment. Topologically, residues 19 to 23 (FRSRE) are extracellular. Residues 24-46 (IEDYIWIFLAVFGVLFAIYSSIT) form a helical membrane-spanning segment. At 47–49 (LLD) the chain is on the cytoplasmic side. The chain crosses the membrane as a helical span at residues 50–72 (YSILINSISGFVICFILGYMMFL). Residues 73–78 (SGIGGG) are Extracellular-facing. Residues 79–89 (DGKMLIGLGAL) traverse the membrane as a helical segment. The Cytoplasmic portion of the chain corresponds to 90–110 (VPKFQMPIYTSLGTLLNLNYV). The helical transmembrane segment at 111 to 139 (PTFPIMVFINGIFFMVFLPFVILFRNILN) threads the bilayer. At 140 to 204 (GARPKTGKEF…EEIWVTPQIP (65 aa)) the chain is on the extracellular side. The chain crosses the membrane as a helical span at residues 205–216 (LIIPITLSYLVT). Over 217-230 (PIIGDRILDFLIPF) the chain is Cytoplasmic.

Belongs to the peptidase A24 family. Archaeal preflagellin peptidase subfamily.

It localises to the cell membrane. The catalysed reaction is Cleaves the signal peptide of 3 to 12 amino acids from the N-terminal of preflagellin, usually at Arg-Gly-|- or Lys-Gly-|-, to release flagellin.. In terms of biological role, cleaves the N-terminal leader peptide from preflagellins. The protein is Preflagellin peptidase (flaK) of Methanococcus maripaludis (strain C6 / ATCC BAA-1332).